A 152-amino-acid chain; its full sequence is Protein-export protein SecB (152 aa).

It belongs to the SecB family. Homotetramer, a dimer of dimers. One homotetramer interacts with 1 SecA dimer.

It is found in the cytoplasm. One of the proteins required for the normal export of preproteins out of the cell cytoplasm. It is a molecular chaperone that binds to a subset of precursor proteins, maintaining them in a translocation-competent state. It also specifically binds to its receptor SecA. The polypeptide is Protein-export protein SecB (Rickettsia bellii (strain RML369-C)).